The sequence spans 1238 residues: DNA-directed RNA polymerase subunit beta (1238 aa).

This sequence belongs to the RNA polymerase beta chain family. In terms of assembly, the RNAP catalytic core consists of 2 alpha, 1 beta, 1 beta' and 1 omega subunit. When a sigma factor is associated with the core the holoenzyme is formed, which can initiate transcription.

It catalyses the reaction RNA(n) + a ribonucleoside 5'-triphosphate = RNA(n+1) + diphosphate. In terms of biological role, DNA-dependent RNA polymerase catalyzes the transcription of DNA into RNA using the four ribonucleoside triphosphates as substrates. In Clostridioides difficile (strain 630) (Peptoclostridium difficile), this protein is DNA-directed RNA polymerase subunit beta.